Reading from the N-terminus, the 121-residue chain is Ribulose bisphosphate carboxylase small subunit (121 aa).

The protein belongs to the RuBisCO small chain family. As to quaternary structure, heterohexadecamer of 8 large and 8 small subunits.

Its function is as follows. RuBisCO catalyzes two reactions: the carboxylation of D-ribulose 1,5-bisphosphate, the primary event in carbon dioxide fixation, as well as the oxidative fragmentation of the pentose substrate. Both reactions occur simultaneously and in competition at the same active site. Although the small subunit is not catalytic it is essential for maximal activity. The polypeptide is Ribulose bisphosphate carboxylase small subunit (Alvinoconcha hessleri symbiotic bacterium).